The chain runs to 319 residues: Phenoxybenzoate dioxygenase subunit beta (319 aa).

The FAD-binding FR-type domain maps to Met7–Asp109. Pro113–Ala223 is a binding site for NAD(+). Residues Phe234–Leu319 enclose the 2Fe-2S ferredoxin-type domain. The [2Fe-2S] cluster site is built by Cys268, Cys273, Cys276, and Cys306.

Belongs to the PDR/VanB family. In terms of assembly, this dioxygenase system consists of two proteins: the alpha subunit (PobA) and a subunit (PobB) that acts as a ferredoxin and a ferredoxin reductase. Requires FMN as cofactor.

It participates in aromatic compound metabolism; carboxydiphenyl ether degradation. Functionally, degrades exclusively diarylether compounds having carboxyl groups in the 3- or 4-position. Yields a hemiacetal that spontaneously hydrolyzes to phenol and protocatechuate. The chain is Phenoxybenzoate dioxygenase subunit beta (pobB) from Ectopseudomonas oleovorans (Pseudomonas oleovorans).